Reading from the N-terminus, the 189-residue chain is MEVILLERIGRLGQMGDTVKVKDGYARNFLLPQGKALRANEANKKKFEGQRAQLEAQNLERKNEAQAVADKLNGESFIVVRSAGETGQLYGSVSTRDIAEIITANGFTLHRNQVELNHPIKTIGLHEVSVSLHPEVQVKVMVNIARSTEEAERQAKGEDLTSIEAIYGIEEQPLSEEVFDDEDEAEDQA.

This sequence belongs to the bacterial ribosomal protein bL9 family.

Binds to the 23S rRNA. This is Large ribosomal subunit protein bL9 from Brucella abortus (strain S19).